Here is a 1122-residue protein sequence, read N- to C-terminus: Histone deacetylase 5 (1122 aa).

The tract at residues 1-22 is disordered; sequence MNSPNESDGMSGREPSLEILPR. Lys-35 participates in a covalent cross-link: Glycyl lysine isopeptide (Lys-Gly) (interchain with G-Cter in SUMO2). Residues 196-281 form a disordered region; that stretch reads KEPTPGGLNH…KVAERRSSPL (86 aa). A compositionally biased stretch (basic and acidic residues) spans 247–258; sequence DSRDDFPLRKTA. Ser-259 carries the post-translational modification Phosphoserine; by AMPK, CaMK1, SIK1 and PKD/PRKD1. The span at 272–281 shows a compositional bias: basic and acidic residues; the sequence is KVAERRSSPL. A Phosphothreonine; by PKC modification is found at Thr-292. Disordered stretches follow at residues 302 to 343 and 481 to 504; these read GAGP…NIPT and MRTV…LPQS. Low complexity predominate over residues 312–327; sequence NSAPGSGPSSPNSSHS. The span at 328–340 shows a compositional bias: polar residues; it reads TIAENGFTGSVPN. Residues 494–504 show a composition bias toward low complexity; the sequence is SRTQSSPLPQS. Ser-498 carries the post-translational modification Phosphoserine; by AMPK, CaMK1, SIK1 and PKD/PRKD1. Lys-533 is modified (N6-acetyllysine). Residues 536–625 are disordered; it reads TKTGELPRQP…GPDLEEPGAG (90 aa). The segment covering 581 to 621 has biased composition (acidic residues); sequence STQEDLEEEDEEEDGEEEEDCIQVKDEEGESGAEEGPDLEE. Phosphoserine occurs at positions 611 and 661. Positions 684–1028 are histone deacetylase; the sequence is GVVYDTFMLK…VSALLSVELQ (345 aa). Residues Cys-696, Cys-698, His-704, and Cys-781 each contribute to the Zn(2+) site. His-833 is a catalytic residue. The Nuclear export signal signature appears at 1081-1122; sequence EEAETVSAMALLSVGAEQAQAAAAREHSPRPAEEPMEQEPAL. The interval 1097–1122 is disordered; the sequence is EQAQAAAAREHSPRPAEEPMEQEPAL. Residues 1104-1113 show a composition bias toward basic and acidic residues; the sequence is AREHSPRPAE. Position 1108 is a phosphoserine (Ser-1108).

It belongs to the histone deacetylase family. HD type 2 subfamily. As to quaternary structure, interacts with AHRR, BAHD1, BCOR, HDAC7, HDAC9, CTBP1, MEF2C, NCOR2, NRIP1, PHB2 and a 14-3-3 chaperone protein. Interacts with BCL6, DDIT3/CHOP, GRK5, KDM5B and MYOCD. Interacts with EP300 in the presence of TFAP2C. Interacts with ANKRA2. Interacts with CUL7 (as part of the 3M complex); negatively regulated by ANKRA2. Interacts with ZBTB7B; the interaction allows the recruitment of HDAC4 on CD8 loci for deacetylation and possible inhibition of CD8 genes expression. Interacts with RARA. In terms of processing, phosphorylated by AMPK, CaMK1, SIK1 and PRKD1 at Ser-259 and Ser-498. The phosphorylation is required for the export to the cytoplasm and inhibition. Phosphorylated by the PKC kinases PKN1 and PKN2, impairing nuclear import. Phosphorylated by GRK5, leading to nuclear export of HDAC5 and allowing MEF2-mediated transcription. Ubiquitinated. Polyubiquitination however does not lead to its degradation.

Its subcellular location is the nucleus. It localises to the cytoplasm. The enzyme catalyses N(6)-acetyl-L-lysyl-[histone] + H2O = L-lysyl-[histone] + acetate. Responsible for the deacetylation of lysine residues on the N-terminal part of the core histones (H2A, H2B, H3 and H4). Histone deacetylation gives a tag for epigenetic repression and plays an important role in transcriptional regulation, cell cycle progression and developmental events. Histone deacetylases act via the formation of large multiprotein complexes. Involved in muscle maturation by repressing transcription of myocyte enhancer MEF2C. During muscle differentiation, it shuttles into the cytoplasm, allowing the expression of myocyte enhancer factors. Serves as a corepressor of RARA and causes its deacetylation. In association with RARA, plays a role in the repression of microRNA-10a and thereby in the inflammatory response. This is Histone deacetylase 5 (HDAC5) from Pongo abelii (Sumatran orangutan).